The following is a 457-amino-acid chain: Flavohemoprotein-2 (457 aa).

A Globin domain is found at 2–157; the sequence is ALSEDTIKAV…LADLLIKREE (156 aa). Residue His-106 coordinates heme b. Catalysis depends on charge relay system residues Tyr-116 and Glu-156. The reductase stretch occupies residues 168–456; sequence GGWRQTRTFR…FEMFGPFKAS (289 aa). One can recognise an FAD-binding FR-type domain in the interval 171–278; the sequence is RQTRTFRVEE…APPYGDFFLR (108 aa). Residues Tyr-210 and 227 to 230 contribute to the FAD site; that span reads RQYS. 320 to 325 contacts NADP(+); that stretch reads GIGQTP. 449–452 lines the FAD pocket; that stretch reads MFGP.

This sequence belongs to the globin family. Two-domain flavohemoproteins subfamily. It in the C-terminal section; belongs to the flavoprotein pyridine nucleotide cytochrome reductase family. Monomer. Heme b is required as a cofactor. FAD serves as cofactor.

The enzyme catalyses 2 nitric oxide + NADPH + 2 O2 = 2 nitrate + NADP(+) + H(+). It catalyses the reaction 2 nitric oxide + NADH + 2 O2 = 2 nitrate + NAD(+) + H(+). In terms of biological role, flavohemoprotein involved in nitric oxide (NO) detoxification in an aerobic process, termed nitric oxide dioxygenase (NOD) reaction that utilizes O(2) and NAD(P)H to convert NO to nitrate, which protects the protozoan parasite from various noxious nitrogen compounds. Therefore, plays a central role in the inducible response to nitrosative stress. May also be involved in O(2) detoxification. In Giardia intestinalis (strain P15) (Giardia lamblia), this protein is Flavohemoprotein-2 (hmpA-2).